Reading from the N-terminus, the 142-residue chain is Hemoglobin subunit alpha (142 aa).

N-acetylserine is present on serine 1. Residues 1–142 (SLSDKDKAAV…VALALAERYR (142 aa)) form the Globin domain. Residue histidine 59 participates in O2 binding. Residue histidine 88 coordinates heme b.

The protein belongs to the globin family. Hb1 is a heterotetramer of two alpha chains and two beta chains. HbC is a heterotetramer of two alpha chains and two beta-C chains. Red blood cells.

In terms of biological role, involved in oxygen transport from gills to the various peripheral tissues. The chain is Hemoglobin subunit alpha (hba) from Trematomus bernacchii (Emerald rockcod).